The sequence spans 232 residues: Purine nucleoside phosphorylase DeoD-type (232 aa).

An a purine D-ribonucleoside-binding site is contributed by H4. Phosphate contacts are provided by residues G20, R24, R43, and 87 to 90 (RIGT). A purine D-ribonucleoside contacts are provided by residues 179–181 (EME) and 203–204 (SD). D204 serves as the catalytic Proton donor.

The protein belongs to the PNP/UDP phosphorylase family. In terms of assembly, homohexamer; trimer of homodimers.

It carries out the reaction a purine D-ribonucleoside + phosphate = a purine nucleobase + alpha-D-ribose 1-phosphate. It catalyses the reaction a purine 2'-deoxy-D-ribonucleoside + phosphate = a purine nucleobase + 2-deoxy-alpha-D-ribose 1-phosphate. In terms of biological role, catalyzes the reversible phosphorolytic breakdown of the N-glycosidic bond in the beta-(deoxy)ribonucleoside molecules, with the formation of the corresponding free purine bases and pentose-1-phosphate. The sequence is that of Purine nucleoside phosphorylase DeoD-type from Caldanaerobacter subterraneus subsp. tengcongensis (strain DSM 15242 / JCM 11007 / NBRC 100824 / MB4) (Thermoanaerobacter tengcongensis).